Here is an 883-residue protein sequence, read N- to C-terminus: Histidine--tRNA ligase, cytoplasmic (883 aa).

It belongs to the class-II aminoacyl-tRNA synthetase family.

The protein localises to the cytoplasm. Its subcellular location is the cytosol. The catalysed reaction is tRNA(His) + L-histidine + ATP = L-histidyl-tRNA(His) + AMP + diphosphate + H(+). This Arabidopsis thaliana (Mouse-ear cress) protein is Histidine--tRNA ligase, cytoplasmic.